We begin with the raw amino-acid sequence, 962 residues long: DNA primase (962 aa).

Residues 894–932 form a CHC2-type zinc finger; the sequence is CLRARHARSPPARTFVALSVDAHDRLCISLSQQCFATKC.

It belongs to the herpesviridae DNA primase family. In terms of assembly, associates with the helicase and the primase-associated factor to form the helicase-primase factor.

It localises to the host nucleus. Essential component of the helicase/primase complex. Unwinds the DNA at the replication forks and generates single-stranded DNA for both leading and lagging strand synthesis. The primase initiates primer synthesis and thereby produces large amount of short RNA primers on the lagging strand that the polymerase elongates using dNTPs. The protein is DNA primase (UL52) of Sus scrofa (Pig).